The sequence spans 258 residues: UPF0328 protein ECU07_0060 (258 aa).

This sequence belongs to the UPF0328 family.

The chain is UPF0328 protein ECU07_0060 from Encephalitozoon cuniculi (strain GB-M1) (Microsporidian parasite).